We begin with the raw amino-acid sequence, 396 residues long: MAVRIKLKPGREKSLERRHPWVFSNGIHNVKGKLEPGDTVDVVAHDGHWLGRGAWSPESQIQVRIWTFDREEEIDREFFKRRILRAQAGRDDLIREQGLTGYRLIAAESDGLPGITIDKYANVLVCQLLSMGADVWRDTIVDVLAELYPDCAIYERSDVDSRKKEGLASTMGLLHGSLPEMPVIIEENGIKIAVDVTKGHKTGFYLDQRDNRAMAARFVKGKSVLNCFCYTGTFGLYAAKAGAASIENVDVSALALDTARLNMRVNGLNDDNVHYNEADVFKLLRQYRDEGKTFDVIVLDPPKFADNKSQLNGACRGYKDINMIALQLLNPGGVLLTFSCSGLMPADLFQKIVADAALDAKREIQFIERLSQASDHPIGSAFPEGFYLKGLVARVW.

The PUA domain occupies 2–79 (AVRIKLKPGR…REEEIDREFF (78 aa)).

It belongs to the methyltransferase superfamily. RlmI family.

It is found in the cytoplasm. It catalyses the reaction cytidine(1962) in 23S rRNA + S-adenosyl-L-methionine = 5-methylcytidine(1962) in 23S rRNA + S-adenosyl-L-homocysteine + H(+). Functionally, specifically methylates the cytosine at position 1962 (m5C1962) of 23S rRNA. The chain is Ribosomal RNA large subunit methyltransferase I from Shewanella sp. (strain MR-7).